We begin with the raw amino-acid sequence, 321 residues long: MNRPERLQPGVKLRDADKVSRIPVKIVPSERETMLRKPDWLRVKLPASNQRILEIKQALRSNGLHSVCEEASCPNLAECFNHGTATFMILGAICTRRCPFCDVAHGRPLKPDADEPVKLAQTIRDMKLKYVVITSVDRDDLRDGGAQHFADCIREIRKLNPEIKIEILVPDFRGRIDAALDILSTEPPDVFNHNLETAPMHYRKARPGANYQWSLDLLKRFKERHPNVPTKSGLMMGLGETNEEIAQVLRDLREHKVEMLTLGQYLQPSKFHLPVERYVSPAEFDELKVLADELGFTHAACGPLVRSSYHADLQAQGKEVK.

[4Fe-4S] cluster-binding residues include cysteine 68, cysteine 73, cysteine 79, cysteine 94, cysteine 98, cysteine 101, and serine 308. A Radical SAM core domain is found at 80–297; that stretch reads FNHGTATFMI…KVLADELGFT (218 aa).

This sequence belongs to the radical SAM superfamily. Lipoyl synthase family. [4Fe-4S] cluster serves as cofactor.

The protein localises to the cytoplasm. The enzyme catalyses [[Fe-S] cluster scaffold protein carrying a second [4Fe-4S](2+) cluster] + N(6)-octanoyl-L-lysyl-[protein] + 2 oxidized [2Fe-2S]-[ferredoxin] + 2 S-adenosyl-L-methionine + 4 H(+) = [[Fe-S] cluster scaffold protein] + N(6)-[(R)-dihydrolipoyl]-L-lysyl-[protein] + 4 Fe(3+) + 2 hydrogen sulfide + 2 5'-deoxyadenosine + 2 L-methionine + 2 reduced [2Fe-2S]-[ferredoxin]. The protein operates within protein modification; protein lipoylation via endogenous pathway; protein N(6)-(lipoyl)lysine from octanoyl-[acyl-carrier-protein]: step 2/2. Functionally, catalyzes the radical-mediated insertion of two sulfur atoms into the C-6 and C-8 positions of the octanoyl moiety bound to the lipoyl domains of lipoate-dependent enzymes, thereby converting the octanoylated domains into lipoylated derivatives. The chain is Lipoyl synthase from Shewanella sp. (strain MR-7).